Here is a 173-residue protein sequence, read N- to C-terminus: NADH-ubiquinone oxidoreductase chain 6 (173 aa).

A run of 5 helical transmembrane segments spans residues 1-21 (MTYI…AVAS), 27-47 (FAAL…VGYG), 53-73 (LVLF…SAAL), 86-106 (SVLG…GWFW), and 139-159 (YGGG…FVVL).

Belongs to the complex I subunit 6 family.

The protein resides in the mitochondrion membrane. The enzyme catalyses a ubiquinone + NADH + 5 H(+)(in) = a ubiquinol + NAD(+) + 4 H(+)(out). In terms of biological role, core subunit of the mitochondrial membrane respiratory chain NADH dehydrogenase (Complex I) that is believed to belong to the minimal assembly required for catalysis. Complex I functions in the transfer of electrons from NADH to the respiratory chain. The immediate electron acceptor for the enzyme is believed to be ubiquinone. This chain is NADH-ubiquinone oxidoreductase chain 6 (MT-ND6), found in Salmo salar (Atlantic salmon).